Consider the following 269-residue polypeptide: Hydroxyethylthiazole kinase (269 aa).

M48 contacts substrate. K124 and T170 together coordinate ATP. Residue G197 participates in substrate binding.

The protein belongs to the Thz kinase family. Requires Mg(2+) as cofactor.

It carries out the reaction 5-(2-hydroxyethyl)-4-methylthiazole + ATP = 4-methyl-5-(2-phosphooxyethyl)-thiazole + ADP + H(+). It participates in cofactor biosynthesis; thiamine diphosphate biosynthesis; 4-methyl-5-(2-phosphoethyl)-thiazole from 5-(2-hydroxyethyl)-4-methylthiazole: step 1/1. Its function is as follows. Catalyzes the phosphorylation of the hydroxyl group of 4-methyl-5-beta-hydroxyethylthiazole (THZ). The chain is Hydroxyethylthiazole kinase from Clostridium kluyveri (strain NBRC 12016).